A 65-amino-acid chain; its full sequence is Large ribosomal subunit protein bL35 (65 aa).

It belongs to the bacterial ribosomal protein bL35 family.

The polypeptide is Large ribosomal subunit protein bL35 (Caldicellulosiruptor saccharolyticus (strain ATCC 43494 / DSM 8903 / Tp8T 6331)).